A 316-amino-acid chain; its full sequence is MQILLANPRGFCAGVDRAISIVERALELFGTPIYVRHEVVHNRYVVNGLRERGAIFIEQIEDVPDGAILIFSAHGVSQAVRNEAKNRDLTVFDATCPLVTKVHMEVARASKKGVEAILIGHAGHPEVEGTMGQYSNADGGMYLVESPDDVWQLQVKDEKNLCFMTQTTLSVDDTYAVIDALRERFPRIIGPRKDDICYATTNRQEAVRHLSDKADVVFVVGSKNSSNSNRLAELAQRAGKAAYLIDSADDIQESWLTGASYVGVTAGASAPDILVQQVIQRLKELGGKVAVEMQGREENIVFEVPKELRVEVKQID.

A [4Fe-4S] cluster-binding site is contributed by C12. Positions 41 and 74 each coordinate (2E)-4-hydroxy-3-methylbut-2-enyl diphosphate. Dimethylallyl diphosphate contacts are provided by H41 and H74. The isopentenyl diphosphate site is built by H41 and H74. C96 serves as a coordination point for [4Fe-4S] cluster. Residue H124 participates in (2E)-4-hydroxy-3-methylbut-2-enyl diphosphate binding. H124 is a binding site for dimethylallyl diphosphate. Residue H124 coordinates isopentenyl diphosphate. Catalysis depends on E126, which acts as the Proton donor. T167 lines the (2E)-4-hydroxy-3-methylbut-2-enyl diphosphate pocket. A [4Fe-4S] cluster-binding site is contributed by C197. (2E)-4-hydroxy-3-methylbut-2-enyl diphosphate is bound by residues S225, S226, N227, and S269. S225, S226, N227, and S269 together coordinate dimethylallyl diphosphate. Residues S225, S226, N227, and S269 each coordinate isopentenyl diphosphate.

Belongs to the IspH family. In terms of assembly, homodimer. Requires [4Fe-4S] cluster as cofactor.

The catalysed reaction is isopentenyl diphosphate + 2 oxidized [2Fe-2S]-[ferredoxin] + H2O = (2E)-4-hydroxy-3-methylbut-2-enyl diphosphate + 2 reduced [2Fe-2S]-[ferredoxin] + 2 H(+). The enzyme catalyses dimethylallyl diphosphate + 2 oxidized [2Fe-2S]-[ferredoxin] + H2O = (2E)-4-hydroxy-3-methylbut-2-enyl diphosphate + 2 reduced [2Fe-2S]-[ferredoxin] + 2 H(+). It participates in isoprenoid biosynthesis; dimethylallyl diphosphate biosynthesis; dimethylallyl diphosphate from (2E)-4-hydroxy-3-methylbutenyl diphosphate: step 1/1. Its pathway is isoprenoid biosynthesis; isopentenyl diphosphate biosynthesis via DXP pathway; isopentenyl diphosphate from 1-deoxy-D-xylulose 5-phosphate: step 6/6. Its function is as follows. Catalyzes the conversion of 1-hydroxy-2-methyl-2-(E)-butenyl 4-diphosphate (HMBPP) into a mixture of isopentenyl diphosphate (IPP) and dimethylallyl diphosphate (DMAPP). Acts in the terminal step of the DOXP/MEP pathway for isoprenoid precursor biosynthesis. This is 4-hydroxy-3-methylbut-2-enyl diphosphate reductase from Pectobacterium atrosepticum (strain SCRI 1043 / ATCC BAA-672) (Erwinia carotovora subsp. atroseptica).